The chain runs to 492 residues: Ketol-acid reductoisomerase (NADP(+)) (492 aa).

Residues Ala-15–Ser-208 form the KARI N-terminal Rossmann domain. NADP(+) is bound by residues Cys-45 to Gln-48, Arg-68, Arg-76, Ser-78, and Asp-108 to Gln-110. Residue His-132 is part of the active site. Gly-158 provides a ligand contact to NADP(+). KARI C-terminal knotted domains lie at Ser-209 to Gln-344 and Phe-345 to Met-485. Positions 217, 221, 389, and 393 each coordinate Mg(2+). Ser-414 is a binding site for substrate.

This sequence belongs to the ketol-acid reductoisomerase family. Mg(2+) is required as a cofactor.

It carries out the reaction (2R)-2,3-dihydroxy-3-methylbutanoate + NADP(+) = (2S)-2-acetolactate + NADPH + H(+). The enzyme catalyses (2R,3R)-2,3-dihydroxy-3-methylpentanoate + NADP(+) = (S)-2-ethyl-2-hydroxy-3-oxobutanoate + NADPH + H(+). It functions in the pathway amino-acid biosynthesis; L-isoleucine biosynthesis; L-isoleucine from 2-oxobutanoate: step 2/4. The protein operates within amino-acid biosynthesis; L-valine biosynthesis; L-valine from pyruvate: step 2/4. In terms of biological role, involved in the biosynthesis of branched-chain amino acids (BCAA). Catalyzes an alkyl-migration followed by a ketol-acid reduction of (S)-2-acetolactate (S2AL) to yield (R)-2,3-dihydroxy-isovalerate. In the isomerase reaction, S2AL is rearranged via a Mg-dependent methyl migration to produce 3-hydroxy-3-methyl-2-ketobutyrate (HMKB). In the reductase reaction, this 2-ketoacid undergoes a metal-dependent reduction by NADPH to yield (R)-2,3-dihydroxy-isovalerate. The sequence is that of Ketol-acid reductoisomerase (NADP(+)) from Yersinia enterocolitica serotype O:8 / biotype 1B (strain NCTC 13174 / 8081).